The following is a 214-amino-acid chain: Large ribosomal subunit protein bL25 (214 aa).

Disordered stretches follow at residues 1-23 (MSNEFLLNAESRSDTGKGASRRL) and 182-214 (DHDQPVAAVHQPKVRASSDDDDAAEGEEAASEE). Over residues 200-214 (DDDDAAEGEEAASEE) the composition is skewed to acidic residues.

This sequence belongs to the bacterial ribosomal protein bL25 family. CTC subfamily. As to quaternary structure, part of the 50S ribosomal subunit; part of the 5S rRNA/L5/L18/L25 subcomplex. Contacts the 5S rRNA. Binds to the 5S rRNA independently of L5 and L18.

Functionally, this is one of the proteins that binds to the 5S RNA in the ribosome where it forms part of the central protuberance. This is Large ribosomal subunit protein bL25 from Alcanivorax borkumensis (strain ATCC 700651 / DSM 11573 / NCIMB 13689 / SK2).